A 345-amino-acid chain; its full sequence is Dihydroorotase (345 aa).

The Zn(2+) site is built by His14 and His16. Substrate contacts are provided by residues 16–18 and Asn42; that span reads HLR. Positions 100, 137, and 175 each coordinate Zn(2+). Lys100 is subject to N6-carboxylysine. Residue His137 coordinates substrate. Position 220 (Leu220) interacts with substrate. Asp248 lines the Zn(2+) pocket. The active site involves Asp248. 2 residues coordinate substrate: His252 and Ala264.

The protein belongs to the metallo-dependent hydrolases superfamily. DHOase family. Class II DHOase subfamily. As to quaternary structure, homodimer. The cofactor is Zn(2+).

The catalysed reaction is (S)-dihydroorotate + H2O = N-carbamoyl-L-aspartate + H(+). The protein operates within pyrimidine metabolism; UMP biosynthesis via de novo pathway; (S)-dihydroorotate from bicarbonate: step 3/3. Catalyzes the reversible cyclization of carbamoyl aspartate to dihydroorotate. This Nitrosococcus oceani (strain ATCC 19707 / BCRC 17464 / JCM 30415 / NCIMB 11848 / C-107) protein is Dihydroorotase.